Here is a 367-residue protein sequence, read N- to C-terminus: Glutamate 5-kinase (367 aa).

Lys10 provides a ligand contact to ATP. Residues Ser50, Asp137, and Asn149 each contribute to the substrate site. ATP is bound by residues 169 to 170 (TD) and 211 to 217 (TGGMGTK). The region spanning 275–353 (AGEITVDEGA…QQIDAILGYE (79 aa)) is the PUA domain.

This sequence belongs to the glutamate 5-kinase family.

It localises to the cytoplasm. It carries out the reaction L-glutamate + ATP = L-glutamyl 5-phosphate + ADP. It functions in the pathway amino-acid biosynthesis; L-proline biosynthesis; L-glutamate 5-semialdehyde from L-glutamate: step 1/2. In terms of biological role, catalyzes the transfer of a phosphate group to glutamate to form L-glutamate 5-phosphate. In Cronobacter sakazakii (strain ATCC BAA-894) (Enterobacter sakazakii), this protein is Glutamate 5-kinase.